We begin with the raw amino-acid sequence, 377 residues long: Beta sliding clamp (377 aa).

It belongs to the beta sliding clamp family. Forms a ring-shaped head-to-tail homodimer around DNA which binds and tethers DNA polymerases and other proteins to the DNA. The DNA replisome complex has a single clamp-loading complex (3 tau and 1 each of delta, delta', psi and chi subunits) which binds 3 Pol III cores (1 core on the leading strand and 2 on the lagging strand) each with a beta sliding clamp dimer. Additional proteins in the replisome are other copies of gamma, psi and chi, Ssb, DNA helicase and RNA primase.

It localises to the cytoplasm. In terms of biological role, confers DNA tethering and processivity to DNA polymerases and other proteins. Acts as a clamp, forming a ring around DNA (a reaction catalyzed by the clamp-loading complex) which diffuses in an ATP-independent manner freely and bidirectionally along dsDNA. Initially characterized for its ability to contact the catalytic subunit of DNA polymerase III (Pol III), a complex, multichain enzyme responsible for most of the replicative synthesis in bacteria; Pol III exhibits 3'-5' exonuclease proofreading activity. The beta chain is required for initiation of replication as well as for processivity of DNA replication. The polypeptide is Beta sliding clamp (dnaN) (Staphylococcus epidermidis (strain ATCC 35984 / DSM 28319 / BCRC 17069 / CCUG 31568 / BM 3577 / RP62A)).